A 334-amino-acid chain; its full sequence is GTP 3',8-cyclase (334 aa).

In terms of domain architecture, Radical SAM core spans 13–239 (RFHRKFYYLR…KVKAANDGPA (227 aa)). R22 lines the GTP pocket. C29 and C33 together coordinate [4Fe-4S] cluster. Position 35 (Y35) interacts with S-adenosyl-L-methionine. C36 is a binding site for [4Fe-4S] cluster. Residue R73 coordinates GTP. G77 serves as a coordination point for S-adenosyl-L-methionine. T104 is a binding site for GTP. S-adenosyl-L-methionine is bound at residue S128. K165 provides a ligand contact to GTP. Residue M199 coordinates S-adenosyl-L-methionine. 2 residues coordinate [4Fe-4S] cluster: C262 and C265. GTP is bound at residue 267–269 (RLR). C279 serves as a coordination point for [4Fe-4S] cluster.

This sequence belongs to the radical SAM superfamily. MoaA family. As to quaternary structure, monomer and homodimer. It depends on [4Fe-4S] cluster as a cofactor.

The enzyme catalyses GTP + AH2 + S-adenosyl-L-methionine = (8S)-3',8-cyclo-7,8-dihydroguanosine 5'-triphosphate + 5'-deoxyadenosine + L-methionine + A + H(+). The protein operates within cofactor biosynthesis; molybdopterin biosynthesis. Functionally, catalyzes the cyclization of GTP to (8S)-3',8-cyclo-7,8-dihydroguanosine 5'-triphosphate. This is GTP 3',8-cyclase from Vibrio vulnificus (strain CMCP6).